Here is a 368-residue protein sequence, read N- to C-terminus: Phosphoserine aminotransferase (368 aa).

Position 44 (R44) interacts with L-glutamate. Residues 78–79 (AT), W104, T157, D179, and Q202 each bind pyridoxal 5'-phosphate. K203 is subject to N6-(pyridoxal phosphate)lysine. 244 to 245 (NT) is a pyridoxal 5'-phosphate binding site.

This sequence belongs to the class-V pyridoxal-phosphate-dependent aminotransferase family. SerC subfamily. As to quaternary structure, homodimer. Pyridoxal 5'-phosphate serves as cofactor.

It is found in the cytoplasm. It carries out the reaction O-phospho-L-serine + 2-oxoglutarate = 3-phosphooxypyruvate + L-glutamate. The enzyme catalyses 4-(phosphooxy)-L-threonine + 2-oxoglutarate = (R)-3-hydroxy-2-oxo-4-phosphooxybutanoate + L-glutamate. Its pathway is amino-acid biosynthesis; L-serine biosynthesis; L-serine from 3-phospho-D-glycerate: step 2/3. The protein operates within cofactor biosynthesis; pyridoxine 5'-phosphate biosynthesis; pyridoxine 5'-phosphate from D-erythrose 4-phosphate: step 3/5. Functionally, catalyzes the reversible conversion of 3-phosphohydroxypyruvate to phosphoserine and of 3-hydroxy-2-oxo-4-phosphonooxybutanoate to phosphohydroxythreonine. The protein is Phosphoserine aminotransferase of Neisseria gonorrhoeae (strain ATCC 700825 / FA 1090).